Here is a 666-residue protein sequence, read N- to C-terminus: tRNA 5-methylaminomethyl-2-thiouridine biosynthesis bifunctional protein MnmC (666 aa).

Positions Met-1–Glu-245 are tRNA (mnm(5)s(2)U34)-methyltransferase. Residues Ile-270 to Lys-666 are FAD-dependent cmnm(5)s(2)U34 oxidoreductase.

It in the N-terminal section; belongs to the methyltransferase superfamily. tRNA (mnm(5)s(2)U34)-methyltransferase family. The protein in the C-terminal section; belongs to the DAO family. FAD is required as a cofactor.

It is found in the cytoplasm. The catalysed reaction is 5-aminomethyl-2-thiouridine(34) in tRNA + S-adenosyl-L-methionine = 5-methylaminomethyl-2-thiouridine(34) in tRNA + S-adenosyl-L-homocysteine + H(+). In terms of biological role, catalyzes the last two steps in the biosynthesis of 5-methylaminomethyl-2-thiouridine (mnm(5)s(2)U) at the wobble position (U34) in tRNA. Catalyzes the FAD-dependent demodification of cmnm(5)s(2)U34 to nm(5)s(2)U34, followed by the transfer of a methyl group from S-adenosyl-L-methionine to nm(5)s(2)U34, to form mnm(5)s(2)U34. The sequence is that of tRNA 5-methylaminomethyl-2-thiouridine biosynthesis bifunctional protein MnmC from Salmonella choleraesuis (strain SC-B67).